The chain runs to 655 residues: p-hydroxybenzoic acid efflux pump subunit AaeB (655 aa).

Helical transmembrane passes span 13–33 (FAVK…HFQL), 38–58 (WAVL…GGEP), 69–89 (LRII…IAMI), 93–113 (LLMI…SSLV), 121–141 (WGLA…EPLL), 152–172 (EIVI…PRSI), 370–390 (LFWL…IAVV), 407–427 (FIYG…VIIP), 431–451 (QSML…GIEV), and 482–502 (FLDS…VILL).

This sequence belongs to the aromatic acid exporter ArAE (TC 2.A.85) family.

It localises to the cell inner membrane. In terms of biological role, forms an efflux pump with AaeA. Could function as a metabolic relief valve, allowing to eliminate certain compounds when they accumulate to high levels in the cell. The chain is p-hydroxybenzoic acid efflux pump subunit AaeB from Shigella dysenteriae serotype 1 (strain Sd197).